The chain runs to 136 residues: Protein PsiE (136 aa).

4 helical membrane-spanning segments follow: residues 15-35, 55-75, 82-102, and 108-128; these read ILQT…VVFL, YELV…ALIV, FHFP…RLII, and PLDV…LWLC.

This sequence belongs to the PsiE family.

It localises to the cell inner membrane. The chain is Protein PsiE from Escherichia coli (strain UTI89 / UPEC).